Consider the following 471-residue polypeptide: MAGEMTILGSAVLTLLLAGYLAQQYLPLPTPKVIGIDLGTTYCSVGVFFPGTGKVKVIPDENGHISIPSMVSFTDDDVYVGYESLELADSNPQNTIYDAKRFIGKVFTPEELEAEIGRYPFKVLNKNGMVEFSVTSNETITVSPEYVGSRLLLKLKEMAEEYLGMPVANAVISVPAEFDLKQRNSTIQAANLAGLKILRVINEPTAAAMAYGLHKAEVFHVLVIDLGGGTLDVSLLNKQGGMFLTRAMSGNNKLGGQDFNQRLLQYLYKQIYQTYGFLPSRKEEIHRLRQAVEMVKLNLTLHETAQMSVLLTVEENDRKGPPTSDSELPKDKFSQANDPHVDSMFGANLSEKKNGEGQVLFETEISRKLFDTLNEDLFQKILVPIQQVLKEGHLEKTEIDEVVLVGGSTRIPRIRQVIQEFFGKDPNTSVDPDLAVVTGVAIQAGIDGGSWPLQVSALEIPNKHLQKTNFN.

A signal peptide spans 1-22 (MAGEMTILGSAVLTLLLAGYLA). The interval 315-337 (ENDRKGPPTSDSELPKDKFSQAN) is disordered.

The protein belongs to the heat shock protein 70 family. As to quaternary structure, binds UBQLN2.

The protein resides in the microsome. Its subcellular location is the endoplasmic reticulum. Has peptide-independent ATPase activity. This is Heat shock 70 kDa protein 13 (HSPA13) from Bos taurus (Bovine).